The sequence spans 119 residues: Ribonuclease P protein component (119 aa).

The protein belongs to the RnpA family. Consists of a catalytic RNA component (M1 or rnpB) and a protein subunit.

The catalysed reaction is Endonucleolytic cleavage of RNA, removing 5'-extranucleotides from tRNA precursor.. In terms of biological role, RNaseP catalyzes the removal of the 5'-leader sequence from pre-tRNA to produce the mature 5'-terminus. It can also cleave other RNA substrates such as 4.5S RNA. The protein component plays an auxiliary but essential role in vivo by binding to the 5'-leader sequence and broadening the substrate specificity of the ribozyme. The sequence is that of Ribonuclease P protein component from Listeria monocytogenes serotype 4b (strain CLIP80459).